The primary structure comprises 222 residues: Nucleoside triphosphate pyrophosphatase (222 aa).

Aspartate 82 serves as the catalytic Proton acceptor.

The protein belongs to the Maf family. It depends on a divalent metal cation as a cofactor.

Its subcellular location is the cytoplasm. The enzyme catalyses a ribonucleoside 5'-triphosphate + H2O = a ribonucleoside 5'-phosphate + diphosphate + H(+). It catalyses the reaction a 2'-deoxyribonucleoside 5'-triphosphate + H2O = a 2'-deoxyribonucleoside 5'-phosphate + diphosphate + H(+). Its function is as follows. Nucleoside triphosphate pyrophosphatase. May have a dual role in cell division arrest and in preventing the incorporation of modified nucleotides into cellular nucleic acids. The protein is Nucleoside triphosphate pyrophosphatase of Mycobacterium tuberculosis (strain ATCC 25177 / H37Ra).